The chain runs to 85 residues: Large ribosomal subunit protein bL27 (85 aa).

This sequence belongs to the bacterial ribosomal protein bL27 family.

This Vesicomyosocius okutanii subsp. Calyptogena okutanii (strain HA) protein is Large ribosomal subunit protein bL27.